The following is a 586-amino-acid chain: ATP-dependent lipid A-core flippase (586 aa).

Transmembrane regions (helical) follow at residues 25–45 (AYFI…AQLI), 74–94 (LWFV…GAYF), 163–183 (VAWF…AFIC), and 264–284 (VLHI…MILW). In terms of domain architecture, ABC transmembrane type-1 spans 28–317 (IISFIGFGVF…LTKINSIIQK (290 aa)). Residues 349–583 (VELKDVHFGY…SGVYANLYHS (235 aa)) form the ABC transporter domain. 382–389 (GSSGSGKS) provides a ligand contact to ATP.

This sequence belongs to the ABC transporter superfamily. Lipid exporter (TC 3.A.1.106) family. In terms of assembly, homodimer.

It localises to the cell inner membrane. It carries out the reaction ATP + H2O + lipid A-core oligosaccharideSide 1 = ADP + phosphate + lipid A-core oligosaccharideSide 2.. In terms of biological role, involved in lipopolysaccharide (LPS) biosynthesis. Translocates lipid A-core from the inner to the outer leaflet of the inner membrane. Transmembrane domains (TMD) form a pore in the inner membrane and the ATP-binding domain (NBD) is responsible for energy generation. The polypeptide is ATP-dependent lipid A-core flippase (Saccharophagus degradans (strain 2-40 / ATCC 43961 / DSM 17024)).